Here is a 111-residue protein sequence, read N- to C-terminus: WAP four-disulfide core domain protein 12 (111 aa).

The signal sequence occupies residues 1-23 (MGSSSFLVLTVSLALVTLVAAEG). The region spanning 27 to 74 (GIEKAGVCPADNVRCFKSDPPQCHTDQDCLGARKCCYLHCGFKCVIPV) is the WAP domain. Intrachain disulfides connect Cys-34/Cys-62, Cys-41/Cys-66, Cys-49/Cys-61, and Cys-55/Cys-70. Residues 80-111 (GGNKDEDVSGPCPEPGWEAKSPGSSSTGCPQK) form a disordered region. Over residues 101 to 111 (PGSSSTGCPQK) the composition is skewed to polar residues.

It is found in the secreted. Antibacterial protein. Putative acid-stable proteinase inhibitor. The chain is WAP four-disulfide core domain protein 12 (WFDC12) from Papio anubis (Olive baboon).